Reading from the N-terminus, the 330-residue chain is Putative F-box protein At1g57690 (330 aa).

Residues 25–72 (VDIISSLPDVILQHILFSFQTKYAIRTSVLSKRWRHEADAINKALSQY) form the F-box domain.

The chain is Putative F-box protein At1g57690 from Arabidopsis thaliana (Mouse-ear cress).